Here is a 621-residue protein sequence, read N- to C-terminus: tRNA uridine 5-carboxymethylaminomethyl modification enzyme MnmG (621 aa).

Residue 17–22 (GGGHAG) participates in FAD binding. 276–290 (GPRYCPSIEDKIMKF) serves as a coordination point for NAD(+).

Belongs to the MnmG family. Homodimer. Heterotetramer of two MnmE and two MnmG subunits. Requires FAD as cofactor.

It localises to the cytoplasm. NAD-binding protein involved in the addition of a carboxymethylaminomethyl (cmnm) group at the wobble position (U34) of certain tRNAs, forming tRNA-cmnm(5)s(2)U34. The sequence is that of tRNA uridine 5-carboxymethylaminomethyl modification enzyme MnmG from Zymomonas mobilis subsp. mobilis (strain ATCC 31821 / ZM4 / CP4).